The primary structure comprises 253 residues: Chloride intracellular channel protein 4 (253 aa).

Residue Ala2 is modified to N-acetylalanine. A required for insertion into the membrane region spans residues 2–101; it reads ALSMPLNGLK…EEFLEEVLCP (100 aa). Ser4 is subject to Phosphoserine. N6-acetyllysine is present on Lys24. A helical membrane pass occupies residues 37–57; the sequence is FSQRLFMILWLKGVVFSVSTV. One can recognise a GST C-terminal domain in the interval 81–244; it reads NSEVKTDVNK…PSDKEVEIAY (164 aa). The residue at position 130 (Lys130) is an N6-acetyllysine. Phosphoserine occurs at positions 132, 167, and 236. Position 244 is a phosphotyrosine (Tyr244).

This sequence belongs to the chloride channel CLIC family. As to quaternary structure, monomer. Interacts with HRH3.

The protein localises to the cytoplasm. It is found in the cytoskeleton. Its subcellular location is the microtubule organizing center. The protein resides in the centrosome. It localises to the cytoplasmic vesicle membrane. The protein localises to the nucleus. It is found in the cell membrane. Its subcellular location is the mitochondrion. The protein resides in the cell junction. The catalysed reaction is chloride(in) = chloride(out). It carries out the reaction thiocyanate(in) = thiocyanate(out). The enzyme catalyses nitrate(in) = nitrate(out). It catalyses the reaction iodide(out) = iodide(in). The catalysed reaction is bromide(in) = bromide(out). It carries out the reaction fluoride(in) = fluoride(out). The enzyme catalyses choline(out) = choline(in). In terms of biological role, in the soluble state, catalyzes glutaredoxin-like thiol disulfide exchange reactions with reduced glutathione as electron donor. Can insert into membranes and form voltage-dependent multi-ion conductive channels. Membrane insertion seems to be redox-regulated and may occur only under oxidizing conditions. Has alternate cellular functions like a potential role in angiogenesis or in maintaining apical-basolateral membrane polarity during mitosis and cytokinesis. Could also promote endothelial cell proliferation and regulate endothelial morphogenesis (tubulogenesis). Promotes cell-surface expression of HRH3. This is Chloride intracellular channel protein 4 (CLIC4) from Pongo abelii (Sumatran orangutan).